A 98-amino-acid polypeptide reads, in one-letter code: uncharacterized protein (98 aa).

The chain crosses the membrane as a helical span at residues Leu-10 to Val-30.

The protein resides in the host membrane. This is an uncharacterized protein from Saccharolobus islandicus (Sulfolobus islandicus).